Reading from the N-terminus, the 156-residue chain is Ribosomal RNA large subunit methyltransferase H (156 aa).

S-adenosyl-L-methionine contacts are provided by residues Leu-73, Gly-104, and 123-128; that span reads VSSLTL.

Belongs to the RNA methyltransferase RlmH family. As to quaternary structure, homodimer.

It is found in the cytoplasm. The enzyme catalyses pseudouridine(1915) in 23S rRNA + S-adenosyl-L-methionine = N(3)-methylpseudouridine(1915) in 23S rRNA + S-adenosyl-L-homocysteine + H(+). In terms of biological role, specifically methylates the pseudouridine at position 1915 (m3Psi1915) in 23S rRNA. This chain is Ribosomal RNA large subunit methyltransferase H, found in Paraburkholderia xenovorans (strain LB400).